We begin with the raw amino-acid sequence, 1588 residues long: Paternally-expressed gene 3 protein (1588 aa).

The SCAN box domain occupies 46–128; it reads HQRFRNLIYV…TLLENYKEMY (83 aa). Disordered regions lie at residues 128-230, 266-306, and 319-349; these read YQPE…ESYQ, DGHS…RRGI, and KFIK…MSDD. Positions 129-142 are enriched in acidic residues; that stretch reads QPEDDNNSDVTSDD. Basic and acidic residues-rich tracts occupy residues 143–152, 161–182, 206–225, and 295–306; these read DMTRNRRESS, SGDR…DRWS, FEMD…RSQD, and PEAKKSTHRRGI. 3 C2H2-type zinc fingers span residues 454–476, 507–529, and 565–587; these read YVCD…QIMH, FECK…RKIH, and YECR…QKIH. Residues 588 to 607 show a composition bias toward basic and acidic residues; it reads FGDDKDNEREHERERERGET. The disordered stretch occupies residues 588 to 610; sequence FGDDKDNEREHERERERGETFRP. The C2H2-type 4 zinc-finger motif lies at 627–649; it reads YECKVCGETFLHSSSLKEHQKIH. The tract at residues 838-930 is disordered; sequence LVASKPPRSH…EFSVPSSNVR (93 aa). Basic and acidic residues predominate over residues 868–881; the sequence is LNDKRQKIPARENP. The C2H2-type 5 zinc-finger motif lies at 969–991; the sequence is YECQECGECFAHSSDLTEHQKIH. Positions 1056 to 1104 are disordered; sequence EKSHGEESQGENTDGEETHSEETHGQETIEDPVIQGSDMEDPQKDDPDD. Positions 1071–1082 are enriched in basic and acidic residues; sequence EETHSEETHGQE. C2H2-type zinc fingers lie at residues 1107-1129, 1163-1185, 1225-1247, 1282-1304, and 1332-1354; these read YECE…QKVH, YECP…QRIH, IRCL…MRLH, FECA…VTVH, and YECK…KELH. Acidic residues predominate over residues 1395–1415; that stretch reads AEPEVEAAEPEVEAAEPEVEA. Residues 1395–1495 are disordered; the sequence is AEPEVEAAEP…GIEDPEEGED (101 aa). Repeat copies occupy residues 1397 to 1403, 1404 to 1410, 1411 to 1417, 1418 to 1422, 1425 to 1429, 1432 to 1436, and 1439 to 1443. Residues 1397–1417 form a 3 X 7 AA repeat of P-E-V-E-A-A-E region; that stretch reads PEVEAAEPEVEAAEPEVEAAE. The segment at 1418–1443 is 4 X 5 AA repeat of P-X-G-E-A; that stretch reads PNGEAEGPDGEAAEPIGEAGQPNGEA. Composition is skewed to acidic residues over residues 1449–1466 and 1475–1495; these read DADE…ERAE and PEGD…EGED. C2H2-type zinc fingers lie at residues 1505 to 1527 and 1564 to 1586; these read YDCH…LKTH and FKCD…QNTH.

The protein belongs to the krueppel C2H2-type zinc-finger protein family. In terms of assembly, homodimer. Interacts with SIAH1A and SIAH2. Interacts with TRAF2.

The protein localises to the nucleus. The protein resides in the cytoplasm. In terms of biological role, induces apoptosis in cooperation with SIAH1A. Acts as a mediator between p53/TP53 and BAX in a neuronal death pathway that is activated by DNA damage. Acts synergistically with TRAF2 and inhibits TNF induced apoptosis through activation of NF-kappa-B. The polypeptide is Paternally-expressed gene 3 protein (PEG3) (Pan troglodytes (Chimpanzee)).